A 339-amino-acid chain; its full sequence is Ureidoglycine carbamoyltransferase (339 aa).

This sequence belongs to the aspartate/ornithine carbamoyltransferase superfamily. In terms of assembly, homodimer.

It carries out the reaction (S)-2-ureidoglycine + carbamoyl phosphate = allantoate + phosphate + H(+). Its pathway is purine metabolism. Catalyzes the phosphorolysis of allantoate to ureidoglycine and carbamoyl phosphate. Is likely involved in a purine degradation pathway. The polypeptide is Ureidoglycine carbamoyltransferase (Rubrobacter xylanophilus (strain DSM 9941 / JCM 11954 / NBRC 16129 / PRD-1)).